The chain runs to 822 residues: Phenylalanine--tRNA ligase beta subunit (822 aa).

Residues 44 to 162 (LSKNTNLVVG…DQIALGSNAL (119 aa)) enclose the tRNA-binding domain. The tract at residues 201–224 (QSSNNNQETKSTNYKTKNSEDQTN) is disordered. The B5 domain occupies 430–513 (RTNPTISLNL…RLYGCHKLPP (84 aa)). Residues aspartate 491, aspartate 497, and aspartate 501 each contribute to the Mg(2+) site. An FDX-ACB domain is found at 730–822 (PKFPTVIRDL…LIKHFHIEIR (93 aa)).

The protein belongs to the phenylalanyl-tRNA synthetase beta subunit family. Type 1 subfamily. As to quaternary structure, tetramer of two alpha and two beta subunits. The cofactor is Mg(2+).

It is found in the cytoplasm. The enzyme catalyses tRNA(Phe) + L-phenylalanine + ATP = L-phenylalanyl-tRNA(Phe) + AMP + diphosphate + H(+). This is Phenylalanine--tRNA ligase beta subunit from Onion yellows phytoplasma (strain OY-M).